The chain runs to 299 residues: Protein U23 (299 aa).

Residues 1–27 (MRKSEFNAKSCFLMIGICVFNLNSSSC) form the signal peptide. A helical transmembrane segment spans residues 247 to 267 (LVIWICGISFVGAFIIVIVIL).

The protein localises to the host membrane. This is Protein U23 (U23) from Human herpesvirus 6B (strain Z29) (HHV-6 variant B).